Consider the following 481-residue polypeptide: Bindin (481 aa).

The N-terminal stretch at 1–20 is a signal peptide; it reads MGFHQILVTVVALALASVRA. A propeptide spanning residues 21-245 is cleaved from the precursor; sequence EFPSRTDSPT…DSKRGARKKR (225 aa). Composition is skewed to basic and acidic residues over residues 154–163 and 178–189; these read DGDLRKRRES and RKGDEPAGHTLK. Disordered regions lie at residues 154 to 193 and 219 to 243; these read DGDLRKRRESEDVDDDDVSKRASPRKGDEPAGHTLKDLAP and GHSPTRRATDNDAAVSDDSKRGARK. Positions 352–360 are fucose-binding domain; sequence LRHLRHHSN. The tract at residues 376–481 is disordered; the sequence is SAMQEEEEEE…QPYGQGYLQG (106 aa). A compositionally biased stretch (acidic residues) spans 379-389; that stretch reads QEEEEEEEEDA. Gly residues predominate over residues 406 to 416; it reads AGFGGGGGGGA. Composition is skewed to low complexity over residues 417–440 and 464–481; these read MMSPQQMGGQPQGMIGQPQGMGFP and GMGMPPQGQPYGQGYLQG.

This sequence belongs to the bindin family.

The protein localises to the cytoplasmic vesicle. It localises to the secretory vesicle. The protein resides in the acrosome lumen. Species-specific sea urchin sperm protein required for adhesion of sperm to the egg surface during fertilization. Bindin coats the acrosomal process after it is externalized by the acrosome reaction. It binds to sulfated, fucose-containing polysaccharides on the vitelline layer receptor proteoglycans which cover the egg plasma membrane. The chain is Bindin from Strongylocentrotus purpuratus (Purple sea urchin).